The chain runs to 343 residues: Protein RecA (343 aa).

64–71 provides a ligand contact to ATP; sequence GPESSGKT.

It belongs to the RecA family.

Its subcellular location is the cytoplasm. Can catalyze the hydrolysis of ATP in the presence of single-stranded DNA, the ATP-dependent uptake of single-stranded DNA by duplex DNA, and the ATP-dependent hybridization of homologous single-stranded DNAs. It interacts with LexA causing its activation and leading to its autocatalytic cleavage. The polypeptide is Protein RecA (Bacillus mycoides (strain KBAB4) (Bacillus weihenstephanensis)).